Consider the following 179-residue polypeptide: Large ribosomal subunit protein uL5 (179 aa).

The protein belongs to the universal ribosomal protein uL5 family. Part of the 50S ribosomal subunit; part of the 5S rRNA/L5/L18/L25 subcomplex. Contacts the 5S rRNA and the P site tRNA. Forms a bridge to the 30S subunit in the 70S ribosome.

In terms of biological role, this is one of the proteins that bind and probably mediate the attachment of the 5S RNA into the large ribosomal subunit, where it forms part of the central protuberance. In the 70S ribosome it contacts protein S13 of the 30S subunit (bridge B1b), connecting the 2 subunits; this bridge is implicated in subunit movement. Contacts the P site tRNA; the 5S rRNA and some of its associated proteins might help stabilize positioning of ribosome-bound tRNAs. This Staphylococcus aureus (strain MW2) protein is Large ribosomal subunit protein uL5.